Here is a 167-residue protein sequence, read N- to C-terminus: Ribosome maturation factor RimP (167 aa).

This sequence belongs to the RimP family.

It localises to the cytoplasm. Its function is as follows. Required for maturation of 30S ribosomal subunits. This chain is Ribosome maturation factor RimP, found in Cytophaga hutchinsonii (strain ATCC 33406 / DSM 1761 / CIP 103989 / NBRC 15051 / NCIMB 9469 / D465).